Consider the following 440-residue polypeptide: Histidinol dehydrogenase (440 aa).

The NAD(+) site is built by Y133, Q194, and N217. Substrate is bound by residues S240, Q262, and H265. 2 residues coordinate Zn(2+): Q262 and H265. Active-site proton acceptor residues include E330 and H331. Substrate-binding residues include H331, D364, E418, and H423. D364 contacts Zn(2+). H423 contacts Zn(2+).

This sequence belongs to the histidinol dehydrogenase family. Zn(2+) is required as a cofactor.

It carries out the reaction L-histidinol + 2 NAD(+) + H2O = L-histidine + 2 NADH + 3 H(+). Its pathway is amino-acid biosynthesis; L-histidine biosynthesis; L-histidine from 5-phospho-alpha-D-ribose 1-diphosphate: step 9/9. Catalyzes the sequential NAD-dependent oxidations of L-histidinol to L-histidinaldehyde and then to L-histidine. The sequence is that of Histidinol dehydrogenase from Nitrosospira multiformis (strain ATCC 25196 / NCIMB 11849 / C 71).